The sequence spans 311 residues: Short chain dehydrogenase opdN (311 aa).

NADP(+) is bound by residues leucine 48, lysine 73, glutamate 96, asparagine 123, tyrosine 217, and lysine 221. Tyrosine 217 functions as the Proton donor in the catalytic mechanism. Lysine 221 functions as the Lowers pKa of active site Tyr in the catalytic mechanism.

This sequence belongs to the short-chain dehydrogenases/reductases (SDR) family.

It functions in the pathway secondary metabolite biosynthesis. Short chain dehydrogenase; part of the gene cluster that mediates the biosynthesis of oxopyrrolidines, polyketide-amino acid hybrid compounds with feature structures of tetramic acid. Does not seem to play a role in oxopyrrolidines A and B biosynthesis. May be involved in further modifications of these oxopyrrolidines. This Penicillium oxalicum (strain 114-2 / CGMCC 5302) (Penicillium decumbens) protein is Short chain dehydrogenase opdN.